Here is a 97-residue protein sequence, read N- to C-terminus: Aspartyl/glutamyl-tRNA(Asn/Gln) amidotransferase subunit C (97 aa).

This sequence belongs to the GatC family. In terms of assembly, heterotrimer of A, B and C subunits.

It catalyses the reaction L-glutamyl-tRNA(Gln) + L-glutamine + ATP + H2O = L-glutaminyl-tRNA(Gln) + L-glutamate + ADP + phosphate + H(+). The catalysed reaction is L-aspartyl-tRNA(Asn) + L-glutamine + ATP + H2O = L-asparaginyl-tRNA(Asn) + L-glutamate + ADP + phosphate + 2 H(+). Its function is as follows. Allows the formation of correctly charged Asn-tRNA(Asn) or Gln-tRNA(Gln) through the transamidation of misacylated Asp-tRNA(Asn) or Glu-tRNA(Gln) in organisms which lack either or both of asparaginyl-tRNA or glutaminyl-tRNA synthetases. The reaction takes place in the presence of glutamine and ATP through an activated phospho-Asp-tRNA(Asn) or phospho-Glu-tRNA(Gln). This chain is Aspartyl/glutamyl-tRNA(Asn/Gln) amidotransferase subunit C, found in Synechococcus sp. (strain CC9311).